A 327-amino-acid polypeptide reads, in one-letter code: Nuclear apoptosis-inducing factor 1 (327 aa).

A required for nuclear localization and apoptosis-inducing activity region spans residues 1–70; the sequence is MAVPAKKRKM…CRRELPEVKK (70 aa). Low complexity predominate over residues 88–98; the sequence is AAVEGGEAPGP. Disordered regions lie at residues 88–118 and 303–327; these read AAVEGGEAPGPTEEDGAGGPGTGGGSGAGGP and NMPNPATASEPGQVAQNGQPDSIIQ. Residues 104-117 show a composition bias toward gly residues; that stretch reads AGGPGTGGGSGAGG. The segment covering 316–327 has biased composition (polar residues); sequence VAQNGQPDSIIQ.

It belongs to the NAIF1 family. In terms of assembly, interacts with HARBI1.

It is found in the nucleus. Induces apoptosis. The protein is Nuclear apoptosis-inducing factor 1 (NAIF1) of Bos taurus (Bovine).